A 2564-amino-acid polypeptide reads, in one-letter code: Spectrin beta chain, non-erythrocytic 4 (2564 aa).

Positions 1 to 37 (MAQVPGEVDNMEGLPAPNNNPAARWESPDRGWEREQP) are disordered. The interval 1 to 282 (MAQVPGEVDN…IITYVVSFYH (282 aa)) is actin-binding. Basic and acidic residues predominate over residues 26–36 (ESPDRGWEREQ). 2 Calponin-homology (CH) domains span residues 61–165 (AVQK…LRFQ) and 180–285 (RSAK…HYFS). 14 Spectrin repeats span residues 311-418 (IERY…AALR), 430-533 (LAQR…RLEQ), 536-641 (ALQK…AELE), 774-879 (ALHQ…WLRD), 884-982 (YRMF…RKEE), 1089-1196 (RLQR…EALV), 1306-1407 (ELQH…RQLF), 1412-1512 (ADQL…RLLL), 1515-1617 (KELH…QQVL), 1623-1725 (VEQY…ALEQ), 1728-1830 (WLYQ…AQLL), 1835-1935 (ELHK…EDAR), 1944-2046 (ALRF…WLQQ), and 2049-2123 (EVHQ…QSKQ). Residues 1853–1872 (KRRRLPRLTTPPEPRPSASS) are disordered. Residues 2208-2225 (PAAPEDAAETPATPAAAE) are compositionally biased toward low complexity. Disordered regions lie at residues 2208–2439 (PAAP…KSSN) and 2533–2564 (ARWGQTLPTTSSTDEGNPKREGGDRRASGRRK). Basic and acidic residues-rich tracts occupy residues 2227–2254 (VRPRPERQESADRAEELPRRRRPERQES), 2268–2278 (ERQESAEHEAA), and 2287–2318 (EQMERRRERRERRLERQESSEQEMPIRGDLVK). Residues 2343–2355 (PSLPQPRELPPGR) are compositionally biased toward pro residues. Basic and acidic residues-rich tracts occupy residues 2362 to 2377 (LPERTPRPDRPRARDR) and 2424 to 2435 (FLLRKRELDANR). A PH domain is found at 2418–2527 (TVQHEGFLLR…WLEAVASSVA (110 aa)). Residues 2538-2547 (TLPTTSSTDE) show a composition bias toward polar residues. Residues 2548–2564 (GNPKREGGDRRASGRRK) show a composition bias toward basic and acidic residues.

Belongs to the spectrin family. In terms of tissue distribution, expressed in skeletal muscle at the sarcolemma and in the muscle capillaries (at protein level). Abundantly expressed in brain and pancreatic islets.

It localises to the cytoplasm. Its subcellular location is the cytoskeleton. The protein localises to the cell cortex. The polypeptide is Spectrin beta chain, non-erythrocytic 4 (SPTBN4) (Homo sapiens (Human)).